The sequence spans 271 residues: Phospholipid scramblase family member 5 (271 aa).

Positions 1-10 (MASKDAQNQR) are enriched in polar residues. The tract at residues 1-33 (MASKDAQNQRRGLPGFLPGAPDPDQSLPASSNP) is disordered. Residues 1–45 (MASKDAQNQRRGLPGFLPGAPDPDQSLPASSNPGNQAWQLSLPLP) form a proline-rich domain (PRD) region.

The protein belongs to the phospholipid scramblase family.

The polypeptide is Phospholipid scramblase family member 5 (PLSCR5) (Homo sapiens (Human)).